A 301-amino-acid chain; its full sequence is GTPase Era (301 aa).

In terms of domain architecture, Era-type G spans 7 to 175 (YCGFIAIVGR…AAIVRKHLPE (169 aa)). The interval 15 to 22 (GRPNVGKS) is G1. 15-22 (GRPNVGKS) is a GTP binding site. Residues 41–45 (QTTRH) form a G2 region. A G3 region spans residues 62–65 (DTPG). Residues 62–66 (DTPGL) and 124–127 (NKVD) each bind GTP. The interval 124-127 (NKVD) is G4. Residues 154-156 (ISA) are G5. In terms of domain architecture, KH type-2 spans 206–283 (LGAELPYSVT…HLELWVKVKS (78 aa)).

This sequence belongs to the TRAFAC class TrmE-Era-EngA-EngB-Septin-like GTPase superfamily. Era GTPase family. Monomer.

It localises to the cytoplasm. The protein localises to the cell inner membrane. An essential GTPase that binds both GDP and GTP, with rapid nucleotide exchange. Plays a role in 16S rRNA processing and 30S ribosomal subunit biogenesis and possibly also in cell cycle regulation and energy metabolism. In Escherichia coli (strain K12 / DH10B), this protein is GTPase Era.